The primary structure comprises 330 residues: Peroxidase 42 (330 aa).

A signal peptide spans 1 to 23; it reads MGGKGVMMVAILCLWALSATSEA. Intrachain disulfides connect C40/C119, C73/C78, C125/C323, and C204/C231. Catalysis depends on H71, which acts as the Proton acceptor. 4 residues coordinate Ca(2+): D72, V75, D79, and S81. P167 provides a ligand contact to substrate. Residue N170 is glycosylated (N-linked (GlcNAc...) asparagine). H197 is a binding site for heme b. A Ca(2+)-binding site is contributed by S198. Residues D247, T250, and D255 each contribute to the Ca(2+) site.

It belongs to the peroxidase family. Classical plant (class III) peroxidase subfamily. It depends on heme b as a cofactor. The cofactor is Ca(2+). In terms of tissue distribution, constitutively expressed in the whole plant, with the highest expression in roots.

Its subcellular location is the secreted. The catalysed reaction is 2 a phenolic donor + H2O2 = 2 a phenolic radical donor + 2 H2O. Removal of H(2)O(2), oxidation of toxic reductants, biosynthesis and degradation of lignin, suberization, auxin catabolism, response to environmental stresses such as wounding, pathogen attack and oxidative stress. These functions might be dependent on each isozyme/isoform in each plant tissue. In terms of biological role, might function as heat shock-like defense protein. The protein is Peroxidase 42 (PER42) of Arabidopsis thaliana (Mouse-ear cress).